The primary structure comprises 289 residues: Diaminopimelate epimerase (289 aa).

Substrate is bound by residues N13, Q47, and N67. Catalysis depends on C76, which acts as the Proton donor. Substrate is bound by residues 77–78 (GN), N167, N200, and 218–219 (ER). C227 (proton acceptor) is an active-site residue. 228–229 (GT) contacts substrate.

The protein belongs to the diaminopimelate epimerase family. In terms of assembly, homodimer.

It localises to the cytoplasm. The enzyme catalyses (2S,6S)-2,6-diaminopimelate = meso-2,6-diaminopimelate. It participates in amino-acid biosynthesis; L-lysine biosynthesis via DAP pathway; DL-2,6-diaminopimelate from LL-2,6-diaminopimelate: step 1/1. Catalyzes the stereoinversion of LL-2,6-diaminopimelate (L,L-DAP) to meso-diaminopimelate (meso-DAP), a precursor of L-lysine and an essential component of the bacterial peptidoglycan. The sequence is that of Diaminopimelate epimerase from Burkholderia pseudomallei (strain 668).